A 399-amino-acid polypeptide reads, in one-letter code: S-adenosylmethionine synthase (399 aa).

Histidine 17 contributes to the ATP binding site. Mg(2+) is bound at residue aspartate 19. K(+) is bound at residue glutamate 45. 2 residues coordinate L-methionine: glutamate 58 and glutamine 101. Positions glutamine 101–glutamine 111 are flexible loop. Residues aspartate 177–lysine 179, arginine 244–phenylalanine 245, aspartate 253, arginine 259–lysine 260, alanine 276, and lysine 280 contribute to the ATP site. Aspartate 253 lines the L-methionine pocket. L-methionine is bound at residue lysine 284.

Belongs to the AdoMet synthase family. In terms of assembly, homotetramer; dimer of dimers. Requires Mg(2+) as cofactor. The cofactor is K(+).

The protein localises to the cytoplasm. It catalyses the reaction L-methionine + ATP + H2O = S-adenosyl-L-methionine + phosphate + diphosphate. Its pathway is amino-acid biosynthesis; S-adenosyl-L-methionine biosynthesis; S-adenosyl-L-methionine from L-methionine: step 1/1. In terms of biological role, catalyzes the formation of S-adenosylmethionine (AdoMet) from methionine and ATP. The overall synthetic reaction is composed of two sequential steps, AdoMet formation and the subsequent tripolyphosphate hydrolysis which occurs prior to release of AdoMet from the enzyme. This Bacillus cereus (strain B4264) protein is S-adenosylmethionine synthase.